The sequence spans 234 residues: 2-amino-5-formylamino-6-ribosylaminopyrimidin-4(3H)-one 5'-monophosphate deformylase (234 aa).

Fe cation contacts are provided by Glu29, His31, Asp40, and His109.

It belongs to the creatininase superfamily. FAPy deformylase family. As to quaternary structure, homodimer. It depends on Fe(2+) as a cofactor. Zn(2+) serves as cofactor.

It catalyses the reaction 2-amino-5-formylamino-6-(5-phospho-D-ribosylamino)pyrimidin-4(3H)-one + H2O = 2,5-diamino-6-(1-D-ribosylamino)pyrimidin-4(3H)-one 5'-phosphate + formate + H(+). Its pathway is cofactor biosynthesis; coenzyme F420 biosynthesis. The protein operates within cofactor biosynthesis; riboflavin biosynthesis. Catalyzes the hydrolysis of the formamide of 2-amino-5-formylamino-6-ribosylamino-4(3H)-pyrimidinone 5'-monophosphate (FAPy) to form 2,5-diamino-6-ribosylamino-4(3H)-pyrimidinone 5'-phosphate (APy). The protein is 2-amino-5-formylamino-6-ribosylaminopyrimidin-4(3H)-one 5'-monophosphate deformylase of Methanobrevibacter ruminantium (strain ATCC 35063 / DSM 1093 / JCM 13430 / OCM 146 / M1) (Methanobacterium ruminantium).